Consider the following 220-residue polypeptide: Charged multivesicular body protein 2a (220 aa).

Coiled coils occupy residues E12 to Q53 and E198 to R219. Residues K196–D220 are disordered. The MIT-interacting motif signature appears at A208–R218. Positions E211–D220 are enriched in basic and acidic residues.

Belongs to the SNF7 family. As to quaternary structure, probable core component of the endosomal sorting required for transport complex III (ESCRT-III). ESCRT-III components are thought to multimerize to form a flat lattice on the perimeter membrane of the endosome.

The protein resides in the late endosome membrane. It localises to the cytoplasm. Its function is as follows. Probable core component of the endosomal sorting required for transport complex III (ESCRT-III) which is involved in multivesicular bodies (MVBs) formation and sorting of endosomal cargo proteins into MVBs. MVBs contain intraluminal vesicles (ILVs) that are generated by invagination and scission from the limiting membrane of the endosome and mostly are delivered to lysosomes enabling degradation of membrane proteins, such as stimulated growth factor receptors, lysosomal enzymes and lipids. The polypeptide is Charged multivesicular body protein 2a (chmp2a) (Xenopus laevis (African clawed frog)).